Reading from the N-terminus, the 405-residue chain is Terminal uridylyltransferase cid1 (405 aa).

Ser90 contacts UTP. Mg(2+) contacts are provided by Asp101 and Asp103. Residues Ala168, Asn171, Thr172, Lys193, Lys197, Ser211, Tyr212, and His336 each coordinate UTP. In terms of domain architecture, PAP-associated spans 267–336 (SLGSLLHGFF…AIEDPFEISH (70 aa)). Arg340 contacts ATP. Residues 377–405 (APIPPRRQKKTDEQSNKKLLNETDGDNSE) form a disordered region. Over residues 386-397 (KTDEQSNKKLLN) the composition is skewed to basic and acidic residues.

Belongs to the DNA polymerase type-B-like family. Requires Mg(2+) as cofactor. It depends on Mn(2+) as a cofactor.

The protein localises to the cytoplasm. It carries out the reaction RNA(n) + UTP = RNA(n)-3'-uridine ribonucleotide + diphosphate. It catalyses the reaction RNA(n) + ATP = RNA(n)-3'-adenine ribonucleotide + diphosphate. Cytoplasmic uridylyltransferase that mediates the terminal uridylation of mRNAs with short poly(A) tails such as such as act1, hcn1 and urg1 mRNAs, hence facilitating global mRNA decay. Uridylates the 3' ends of actin mRNAs upon S-phase arrest. Also has a weak poly(A) polymerase (PAP) activity. Residue His-336 is responsible for the specificity for UTP. Involved in cell cycle arrest where in association with crb2/rhp9 and chk1 it inhibits unscheduled mitosis. This is Terminal uridylyltransferase cid1 from Schizosaccharomyces pombe (strain 972 / ATCC 24843) (Fission yeast).